A 265-amino-acid polypeptide reads, in one-letter code: Protein Rv2993c (265 aa).

A divalent metal cation is bound by residues E114, E116, and D145.

The protein in the C-terminal section; belongs to the FAH family. Requires a divalent metal cation as cofactor.

This chain is Protein Rv2993c, found in Mycobacterium tuberculosis (strain ATCC 25618 / H37Rv).